The sequence spans 447 residues: Tubulin beta chain (447 aa).

The GTP site is built by Gln-11, Glu-69, Ser-138, Gly-142, Thr-143, Gly-144, Asn-204, and Asn-226. Residue Glu-69 coordinates Mg(2+). A disordered region spans residues 424–447; the sequence is QYQEASVSEGEEEYDEEAPLEGEE. The span at 432-447 shows a compositional bias: acidic residues; the sequence is EGEEEYDEEAPLEGEE.

It belongs to the tubulin family. As to quaternary structure, dimer of alpha and beta chains. A typical microtubule is a hollow water-filled tube with an outer diameter of 25 nm and an inner diameter of 15 nM. Alpha-beta heterodimers associate head-to-tail to form protofilaments running lengthwise along the microtubule wall with the beta-tubulin subunit facing the microtubule plus end conferring a structural polarity. Microtubules usually have 13 protofilaments but different protofilament numbers can be found in some organisms and specialized cells. It depends on Mg(2+) as a cofactor.

The protein resides in the cytoplasm. Its subcellular location is the cytoskeleton. In terms of biological role, tubulin is the major constituent of microtubules, a cylinder consisting of laterally associated linear protofilaments composed of alpha- and beta-tubulin heterodimers. Microtubules grow by the addition of GTP-tubulin dimers to the microtubule end, where a stabilizing cap forms. Below the cap, tubulin dimers are in GDP-bound state, owing to GTPase activity of alpha-tubulin. This is Tubulin beta chain from Venturia inaequalis (Apple scab fungus).